A 190-amino-acid chain; its full sequence is Selenoprotein S (190 aa).

A helical membrane pass occupies residues Ser28 to Ile48. A VCP/p97-interacting motif (VIM) region spans residues Arg78–Gln90. A disordered region spans residues Lys115–Asn190. A compositionally biased stretch (gly residues) spans Arg160–Thr174. Sec189 is a non-standard amino acid (selenocysteine).

This sequence belongs to the selenoprotein S family. In terms of assembly, interacts with DERL1 and (via VIM motif) with VCP, suggesting that it forms a membrane complex with DERL1 that serves as a receptor for VCP. Also interacts with DERL2, DERL3 and SELENOK. The SELENOK-SELENOS complex interacts with VCP. Interacts with CCDC47. Truncated SELENOS proteins produced by failed UGA/Sec decoding are ubiquitinated by the CRL2(KLHDC2) and CRL2(KLHDC3) complexes, which recognizes the glycine (Gly) at the C-terminus of truncated SELENOS proteins. Truncated SELENOS proteins produced by failed UGA/Sec decoding are also ubiquitinated by the CRL5(KLHDC1) complex.

It localises to the endoplasmic reticulum membrane. The protein resides in the cytoplasm. Involved in the degradation process of misfolded endoplasmic reticulum (ER) luminal proteins. Participates in the transfer of misfolded proteins from the ER to the cytosol, where they are destroyed by the proteasome in a ubiquitin-dependent manner. Probably acts by serving as a linker between DERL1, which mediates the retrotranslocation of misfolded proteins into the cytosol, and the ATPase complex VCP, which mediates the translocation and ubiquitination. The protein is Selenoprotein S of Mus musculus (Mouse).